Reading from the N-terminus, the 603-residue chain is Protein regulator of cytokinesis 1 (603 aa).

Residues 1 to 341 form a dimerization region; it reads MRRSEVLADE…HLHDAEIVRL (341 aa). 5 coiled-coil regions span residues 34–65, 96–136, 211–246, 272–304, and 383–463; these read EQRL…RERL, ILQL…DILC, SLEN…IREL, RNAL…LAQF, and GNLL…AEML. The spectrin-fold stretch occupies residues 342 to 466; it reads RNYYDVHKEL…QTEAEMLYGS (125 aa). A compositionally biased stretch (basic and acidic residues) spans 447 to 459; the sequence is KQERQLKNKKQTE. The disordered stretch occupies residues 447–502; sequence KQERQLKNKKQTEAEMLYGSTPRTPSKRPGQTPKKSGKMNTTTMSSATPNSSIRPV. The segment at 467-603 is unstructured, Arg/Lys rich; the sequence is TPRTPSKRPG…RILNSTNIQS (137 aa). Thr470 is modified (phosphothreonine; by CDK1). Over residues 484–499 the composition is skewed to polar residues; that stretch reads KMNTTTMSSATPNSSI. Phosphoserine occurs at positions 510 and 568. Residue Thr575 is modified to Phosphothreonine. The disordered stretch occupies residues 583–603; sequence LSKASRSDATSRILNSTNIQS. The span at 589 to 603 shows a compositional bias: polar residues; that stretch reads SDATSRILNSTNIQS. Thr599 bears the Phosphothreonine; by PLK1 mark.

Belongs to the MAP65/ASE1 family. As to quaternary structure, homodimer. Interacts with the C-terminal Rho-GAP domain and the basic region of RACGAP1. The interaction with RACGAP1 inhibits its GAP activity towards CDC42 in vitro, which may be required for maintaining normal spindle morphology. Interacts (via N-terminus) with the C-terminus of CENPE (via C-terminus); the interaction occurs during late mitosis. Interacts (via N-terminus) with KIF4A (via C-terminus); the interaction is required for the progression of mitosis. Interacts (via N-terminus) with KIF23 (via C-terminus); the interaction occurs during late mitosis. Interacts with KIF14 and KIF20A. Interacts with PLK1. Interacts with KIF20B. Interacts with CCDC66. Phosphorylation by CDK1 in early mitosis holds PRC1 in an inactive monomeric state, during the metaphase to anaphase transition, PRC1 is dephosphorylated, promoting interaction with KIF4A, which then translocates PRC1 along mitotic spindles to the plus ends of antiparallel interdigitating microtubules. Dephosphorylation also promotes MT-bundling activity by allowing dimerization. Phosphorylation by CDK1 prevents PLK1-binding: upon degradation of CDK1 at anaphase and dephosphorylation, it is then phosphorylated by PLK1, leading to cytokinesis.

Its subcellular location is the nucleus. The protein localises to the cytoplasm. It localises to the cytoskeleton. It is found in the spindle pole. The protein resides in the midbody. In terms of biological role, key regulator of cytokinesis that cross-links antiparrallel microtubules at an average distance of 35 nM. Essential for controlling the spatiotemporal formation of the midzone and successful cytokinesis. Required for KIF14 localization to the central spindle and midbody. Required to recruit PLK1 to the spindle. Stimulates PLK1 phosphorylation of RACGAP1 to allow recruitment of ECT2 to the central spindle. Acts as an oncogene for promoting bladder cancer cells proliferation, apoptosis inhibition and carcinogenic progression. In Mus musculus (Mouse), this protein is Protein regulator of cytokinesis 1.